A 226-amino-acid chain; its full sequence is ATP synthase F(0) complex subunit a (226 aa).

Helical transmembrane passes span 14–34, 68–88, 97–117, 138–158, 164–184, and 193–213; these read ILGISILPLIMIFPCLLFSAP, WTLMLITLIMFIASTNLLGLL, QLSMNMGMAVPLWLGTVLMGF, IPMLIIIETISLFIQPVALAV, ITAGHLLIHLIGSATLALSSI, and FTILFLLTILEIAVALIQAYV.

The protein belongs to the ATPase A chain family. As to quaternary structure, component of the ATP synthase complex composed at least of ATP5F1A/subunit alpha, ATP5F1B/subunit beta, ATP5MC1/subunit c (homooctomer), MT-ATP6/subunit a, MT-ATP8/subunit 8, ATP5ME/subunit e, ATP5MF/subunit f, ATP5MG/subunit g, ATP5MK/subunit k, ATP5MJ/subunit j, ATP5F1C/subunit gamma, ATP5F1D/subunit delta, ATP5F1E/subunit epsilon, ATP5PF/subunit F6, ATP5PB/subunit b, ATP5PD/subunit d, ATP5PO/subunit OSCP. ATP synthase complex consists of a soluble F(1) head domain (subunits alpha(3) and beta(3)) - the catalytic core - and a membrane F(0) domain - the membrane proton channel (subunits c, a, 8, e, f, g, k and j). These two domains are linked by a central stalk (subunits gamma, delta, and epsilon) rotating inside the F1 region and a stationary peripheral stalk (subunits F6, b, d, and OSCP). Interacts with DNAJC30; interaction is direct.

It is found in the mitochondrion inner membrane. It carries out the reaction H(+)(in) = H(+)(out). Subunit a, of the mitochondrial membrane ATP synthase complex (F(1)F(0) ATP synthase or Complex V) that produces ATP from ADP in the presence of a proton gradient across the membrane which is generated by electron transport complexes of the respiratory chain. ATP synthase complex consist of a soluble F(1) head domain - the catalytic core - and a membrane F(1) domain - the membrane proton channel. These two domains are linked by a central stalk rotating inside the F(1) region and a stationary peripheral stalk. During catalysis, ATP synthesis in the catalytic domain of F(1) is coupled via a rotary mechanism of the central stalk subunits to proton translocation. With the subunit c (ATP5MC1), forms the proton-conducting channel in the F(0) domain, that contains two crucial half-channels (inlet and outlet) that facilitate proton movement from the mitochondrial intermembrane space (IMS) into the matrix. Protons are taken up via the inlet half-channel and released through the outlet half-channel, following a Grotthuss mechanism. This chain is ATP synthase F(0) complex subunit a, found in Tachyglossus aculeatus aculeatus (Southeast Australian short-beaked echidna).